The chain runs to 341 residues: Tetraacyldisaccharide 4'-kinase (341 aa).

54 to 61 contributes to the ATP binding site; that stretch reads TVGGTGKT.

This sequence belongs to the LpxK family.

It carries out the reaction a lipid A disaccharide + ATP = a lipid IVA + ADP + H(+). Its pathway is glycolipid biosynthesis; lipid IV(A) biosynthesis; lipid IV(A) from (3R)-3-hydroxytetradecanoyl-[acyl-carrier-protein] and UDP-N-acetyl-alpha-D-glucosamine: step 6/6. In terms of biological role, transfers the gamma-phosphate of ATP to the 4'-position of a tetraacyldisaccharide 1-phosphate intermediate (termed DS-1-P) to form tetraacyldisaccharide 1,4'-bis-phosphate (lipid IVA). The polypeptide is Tetraacyldisaccharide 4'-kinase (Mesorhizobium japonicum (strain LMG 29417 / CECT 9101 / MAFF 303099) (Mesorhizobium loti (strain MAFF 303099))).